The primary structure comprises 362 residues: Holliday junction branch migration complex subunit RuvB (362 aa).

Residues 1–27 (MANIEKTEFHVPAPVSAAGNQKSSLGN) form a disordered region. The large ATPase domain (RuvB-L) stretch occupies residues 13-206 (APVSAAGNQK…FGFTAQMEFY (194 aa)). Residues Leu-45, Arg-46, Gly-87, Lys-90, Thr-91, Thr-92, 153–155 (EDF), Arg-196, Tyr-206, and Arg-243 contribute to the ATP site. Thr-91 lines the Mg(2+) pocket. The segment at 207 to 277 (EVEDLTKVVV…AAQAALVVFD (71 aa)) is small ATPAse domain (RuvB-S). Residues 280–362 (EMGLDRLDRA…EPPEGIIGSL (83 aa)) are head domain (RuvB-H). 2 residues coordinate DNA: Arg-335 and Arg-340.

The protein belongs to the RuvB family. Homohexamer. Forms an RuvA(8)-RuvB(12)-Holliday junction (HJ) complex. HJ DNA is sandwiched between 2 RuvA tetramers; dsDNA enters through RuvA and exits via RuvB. An RuvB hexamer assembles on each DNA strand where it exits the tetramer. Each RuvB hexamer is contacted by two RuvA subunits (via domain III) on 2 adjacent RuvB subunits; this complex drives branch migration. In the full resolvosome a probable DNA-RuvA(4)-RuvB(12)-RuvC(2) complex forms which resolves the HJ.

It is found in the cytoplasm. The catalysed reaction is ATP + H2O = ADP + phosphate + H(+). Its function is as follows. The RuvA-RuvB-RuvC complex processes Holliday junction (HJ) DNA during genetic recombination and DNA repair, while the RuvA-RuvB complex plays an important role in the rescue of blocked DNA replication forks via replication fork reversal (RFR). RuvA specifically binds to HJ cruciform DNA, conferring on it an open structure. The RuvB hexamer acts as an ATP-dependent pump, pulling dsDNA into and through the RuvAB complex. RuvB forms 2 homohexamers on either side of HJ DNA bound by 1 or 2 RuvA tetramers; 4 subunits per hexamer contact DNA at a time. Coordinated motions by a converter formed by DNA-disengaged RuvB subunits stimulates ATP hydrolysis and nucleotide exchange. Immobilization of the converter enables RuvB to convert the ATP-contained energy into a lever motion, pulling 2 nucleotides of DNA out of the RuvA tetramer per ATP hydrolyzed, thus driving DNA branch migration. The RuvB motors rotate together with the DNA substrate, which together with the progressing nucleotide cycle form the mechanistic basis for DNA recombination by continuous HJ branch migration. Branch migration allows RuvC to scan DNA until it finds its consensus sequence, where it cleaves and resolves cruciform DNA. This Corynebacterium diphtheriae (strain ATCC 700971 / NCTC 13129 / Biotype gravis) protein is Holliday junction branch migration complex subunit RuvB.